Here is a 279-residue protein sequence, read N- to C-terminus: 4-diphosphocytidyl-2-C-methyl-D-erythritol kinase (279 aa).

Lys9 is a catalytic residue. 92-102 (PLAAGLGGGSS) provides a ligand contact to ATP. Asp134 is an active-site residue.

The protein belongs to the GHMP kinase family. IspE subfamily.

The catalysed reaction is 4-CDP-2-C-methyl-D-erythritol + ATP = 4-CDP-2-C-methyl-D-erythritol 2-phosphate + ADP + H(+). It participates in isoprenoid biosynthesis; isopentenyl diphosphate biosynthesis via DXP pathway; isopentenyl diphosphate from 1-deoxy-D-xylulose 5-phosphate: step 3/6. Functionally, catalyzes the phosphorylation of the position 2 hydroxy group of 4-diphosphocytidyl-2C-methyl-D-erythritol. The chain is 4-diphosphocytidyl-2-C-methyl-D-erythritol kinase from Syntrophus aciditrophicus (strain SB).